Reading from the N-terminus, the 423-residue chain is Ferrochelatase, mitochondrial (423 aa).

The transit peptide at 1 to 54 (MRSLGANMAAALRAAGVLLRDPLASSSWRVCQPWRWKSGAAAAAVTTETAQHAQ) directs the protein to the mitochondrion. K57 bears the N6-acetyllysine mark. Protoporphyrin IX is bound by residues R115, Y123, and S130. Residue K138 is modified to N6-succinyllysine. C196 provides a ligand contact to [2Fe-2S] cluster. Active-site residues include H230 and D383. [2Fe-2S] cluster is bound by residues C403, C406, and C411. K415 is modified (N6-acetyllysine; alternate). K415 carries the post-translational modification N6-succinyllysine; alternate.

This sequence belongs to the ferrochelatase family. As to quaternary structure, homodimer. Homotetramer. Interacts with PGRMC1; the interaction results in decreased FECH activity. Interacts with ABCB10 and SLC25A37; this interaction forms an oligomeric complex. Forms a complex with ABCB7 and ABCB10, where a dimeric FECH bridges ABCB7 and ABCB10 homodimers; this complex may be required for cellular iron homeostasis, mitochondrial function and heme biosynthesis. Interacts with ABCB7 and ABCB10. [2Fe-2S] cluster is required as a cofactor.

It is found in the mitochondrion inner membrane. The enzyme catalyses heme b + 2 H(+) = protoporphyrin IX + Fe(2+). The protein operates within porphyrin-containing compound metabolism; protoheme biosynthesis; protoheme from protoporphyrin-IX: step 1/1. Its activity is regulated as follows. Inhibited by nitric oxide (NO). The 2Fe-2S cluster could act as a NO sensor. In terms of biological role, catalyzes the ferrous insertion into protoporphyrin IX and participates in the terminal step in the heme biosynthetic pathway. The protein is Ferrochelatase, mitochondrial of Homo sapiens (Human).